Reading from the N-terminus, the 127-residue chain is Small ribosomal subunit protein uS11 (127 aa).

Belongs to the universal ribosomal protein uS11 family. In terms of assembly, part of the 30S ribosomal subunit. Interacts with proteins S7 and S18. Binds to IF-3.

In terms of biological role, located on the platform of the 30S subunit, it bridges several disparate RNA helices of the 16S rRNA. Forms part of the Shine-Dalgarno cleft in the 70S ribosome. The chain is Small ribosomal subunit protein uS11 from Rickettsia africae (strain ESF-5).